The primary structure comprises 312 residues: Malate dehydrogenase (312 aa).

NAD(+)-binding positions include 7 to 13 (GAAGGIG) and Asp34. 2 residues coordinate substrate: Arg81 and Arg87. NAD(+)-binding positions include Asn94 and 117–119 (ITN). 2 residues coordinate substrate: Asn119 and Arg153. His177 acts as the Proton acceptor in catalysis. Met227 contributes to the NAD(+) binding site.

The protein belongs to the LDH/MDH superfamily. MDH type 1 family. Homodimer.

The enzyme catalyses (S)-malate + NAD(+) = oxaloacetate + NADH + H(+). Functionally, catalyzes the reversible oxidation of malate to oxaloacetate. The sequence is that of Malate dehydrogenase from Escherichia coli (strain 55989 / EAEC).